A 215-amino-acid polypeptide reads, in one-letter code: Cytochrome b6 (215 aa).

Residues isoleucine 32–phenylalanine 52 form a helical membrane-spanning segment. Cysteine 35 serves as a coordination point for heme c. Histidine 86 and histidine 100 together coordinate heme b. 3 consecutive transmembrane segments (helical) span residues alanine 90–phenylalanine 110, leucine 116–tyrosine 136, and leucine 186–isoleucine 206. Histidine 187 and histidine 202 together coordinate heme b.

Belongs to the cytochrome b family. PetB subfamily. As to quaternary structure, the 4 large subunits of the cytochrome b6-f complex are cytochrome b6, subunit IV (17 kDa polypeptide, PetD), cytochrome f and the Rieske protein, while the 4 small subunits are PetG, PetL, PetM and PetN. The complex functions as a dimer. It depends on heme b as a cofactor. Heme c is required as a cofactor.

Its subcellular location is the plastid. It localises to the chloroplast thylakoid membrane. Its function is as follows. Component of the cytochrome b6-f complex, which mediates electron transfer between photosystem II (PSII) and photosystem I (PSI), cyclic electron flow around PSI, and state transitions. This is Cytochrome b6 from Citrus sinensis (Sweet orange).